The chain runs to 723 residues: Transmembrane channel-like protein 7 (723 aa).

Disordered stretches follow at residues 1-28 and 51-71; these read MSES…LSLD and RRRT…KPTD. Residues 1-168 lie on the Extracellular side of the membrane; sequence MSESSGSALQ…GIQSYFSFLR (168 aa). Residue N24 is glycosylated (N-linked (GlcNAc...) asparagine). N84 is a glycosylation site (N-linked (GlcNAc...) asparagine). S89 is modified (phosphoserine). A glycan (N-linked (GlcNAc...) asparagine) is linked at N96. A helical membrane pass occupies residues 169 to 189; sequence FLVLLNLVIFLIIFMLVLLPV. Over 190–219 the chain is Cytoplasmic; sequence LLTKYKITNSSFVLIPFKDMDKQCTVYPVS. Residues 220-240 form a helical membrane-spanning segment; it reads SSGLIYFYSYIIDLLSGTGFL. The Extracellular segment spans residues 241–263; sequence EETSLFYGHYTIDGVKFQNFTYD. The N-linked (GlcNAc...) asparagine glycan is linked to N259. A helical transmembrane segment spans residues 264-284; sequence LPLAYLLSTIASLALSLLWIV. Topologically, residues 285–362 are cytoplasmic; it reads KRSVEGFKIN…EETIRIYSLR (78 aa). The helical transmembrane segment at 363–383 threads the bilayer; it reads LFLNCIVLAVLGACFYAIYVA. The Extracellular portion of the chain corresponds to 384–404; sequence TVFSQEHMKKEIDKMVFGENL. A helical membrane pass occupies residues 405–425; the sequence is FILYLPSIVITLANFITPMIF. Topologically, residues 426 to 494 are cytoplasmic; sequence AKIIRYEDYS…PCWETQVGQE (69 aa). A helical membrane pass occupies residues 495 to 515; that stretch reads MYKLMIFDFIIILAVTLFVDF. At 516–555 the chain is on the extracellular side; that stretch reads PRKLLVTYCSSCKLIQCWGQQEFAIPDNVLGIVYGQTICW. The chain crosses the membrane as a helical span at residues 556 to 576; the sequence is IGAFFSPLLPAIATLKFIIIF. The Cytoplasmic segment spans residues 577–601; the sequence is YVKEWSLLYTCRPSPRPFRASNSNF. The helical transmembrane segment at 602-622 threads the bilayer; that stretch reads FFLLVLLIGLCLAIIPLTISI. Residues 623 to 665 lie on the Extracellular side of the membrane; that stretch reads SRIPSSKACGPFTNFNTTWEVIPKTVSTFPSSLQSFIHGVTSE. A glycan (N-linked (GlcNAc...) asparagine) is linked at N638. The helical transmembrane segment at 666 to 686 threads the bilayer; sequence AFAVPFFMIICLIMFYFIALA. The Cytoplasmic portion of the chain corresponds to 687–723; that stretch reads GAHKRVVIQLREQLSLESRDKCYLIQKLTEAQRDMRN.

It belongs to the TMC family. As to quaternary structure, interacts with PIEZO2; the interaction inhibits PIEZO2-conducted mechanically activated currents.

Its subcellular location is the membrane. Functionally, acts as an inhibitory modulator of PIEZO2 mechanosensitive channel in dorsal root ganglion (DRG) neurons through physical interactions or interference with the interaction between PIEZO2 and the cytoskeleton. This chain is Transmembrane channel-like protein 7, found in Homo sapiens (Human).